A 104-amino-acid polypeptide reads, in one-letter code: Defensin-2 (104 aa).

The first 19 residues, methionine 1–alanine 19, serve as a signal peptide directing secretion. 3 disulfide bridges follow: cysteine 64-cysteine 95, cysteine 81-cysteine 100, and cysteine 85-cysteine 102.

It belongs to the invertebrate defensin family. Type 1 subfamily. As to expression, low expression in head and thorax.

It localises to the secreted. Functionally, antibacterial peptide mostly active against Gram-positive bacteria. This chain is Defensin-2, found in Apis mellifera (Honeybee).